The sequence spans 241 residues: Co-chaperone protein p23-1 (241 aa).

The CS domain maps to 2 to 91 (SRHPEVKWAE…AEPERWNKLL (90 aa)). MGG repeat units follow at residues 129–131 (MGG), 132–134 (MGG), 135–137 (MGG), 138–140 (MGG), 141–143 (MGG), 144–146 (MGG), 147–149 (MGG), 150–152 (MGG), 162–164 (MGG), 165–167 (MGG), 168–170 (MGG), 171–173 (MGG), 180–182 (MGG), 183–185 (MGG), 186–188 (MGG), 189–191 (MGG), and 192–194 (MGG). A 17 X 3 AA repeats of M-G-G region spans residues 129-194 (MGGMGGMGGM…GMGGMGGMGG (66 aa)). The segment at 188–241 (GMGGMGGMEEFEDSDDEEETAKSGDKKDDAVKEEGLATEKAPAAEETTSVKEDK) is disordered. The span at 196 to 206 (EEFEDSDDEEE) shows a compositional bias: acidic residues. Residues 207–224 (TAKSGDKKDDAVKEEGLA) are compositionally biased toward basic and acidic residues. Positions 225–234 (TEKAPAAEET) are enriched in low complexity.

This sequence belongs to the p23/wos2 family. Interacts with HSP90 in an ATP-dependent manner. Interacts with HSP90-5, HSP90-6 and HSP90-7. Widely expressed but preferentially in the root meristem.

Its subcellular location is the cytoplasm. It localises to the nucleus. Functionally, acts as a co-chaperone for HSP90. Controls root development through the modulation of auxin distribution in the root meristem. The chain is Co-chaperone protein p23-1 from Arabidopsis thaliana (Mouse-ear cress).